Consider the following 236-residue polypeptide: ATP synthase subunit 4, mitochondrial (236 aa).

The N-terminal 29 residues, 1-29 (MAFRALTTKAAARPLLALGPRSVAMGARY), are a transit peptide targeting the mitochondrion.

This sequence belongs to the eukaryotic ATPase subunit B family. In terms of assembly, F-type ATPases have 2 components, CF(1) - the catalytic core - and CF(0) - the membrane proton channel. In yeast, the dimeric form of ATP synthase consists of 17 polypeptides: alpha, beta, gamma, delta, epsilon, 4 (B), 5 (OSCP), 6 (A), 8, 9 (C), d, E (Tim11), f, g, h, i/j and k.

It is found in the mitochondrion. The protein localises to the mitochondrion inner membrane. Mitochondrial membrane ATP synthase (F(1)F(0) ATP synthase or Complex V) produces ATP from ADP in the presence of a proton gradient across the membrane which is generated by electron transport complexes of the respiratory chain. F-type ATPases consist of two structural domains, F(1) - containing the extramembraneous catalytic core, and F(0) - containing the membrane proton channel, linked together by a central stalk and a peripheral stalk. During catalysis, ATP synthesis in the catalytic domain of F(1) is coupled via a rotary mechanism of the central stalk subunits to proton translocation. Part of the complex F(0) domain and the peripheric stalk, which acts as a stator to hold the catalytic alpha(3)beta(3) subcomplex and subunit a/ATP6 static relative to the rotary elements. This Eremothecium gossypii (strain ATCC 10895 / CBS 109.51 / FGSC 9923 / NRRL Y-1056) (Yeast) protein is ATP synthase subunit 4, mitochondrial (ATP4).